We begin with the raw amino-acid sequence, 143 residues long: MGDRRQARELALQALYYFDVDKGSPDELLALFCSNFEDRIDESIRPFFLDLVKGVTQARAEVDDLMNRSSSNWKVSRMPIVDRNIMRMAIFEMLKQPDIPPTVSINEAVEIGKRFGTRGSGAFINGVLDKIRVLKNIDRGEKE.

It belongs to the NusB family.

Its function is as follows. Involved in transcription antitermination. Required for transcription of ribosomal RNA (rRNA) genes. Binds specifically to the boxA antiterminator sequence of the ribosomal RNA (rrn) operons. The chain is Transcription antitermination protein NusB from Desulforapulum autotrophicum (strain ATCC 43914 / DSM 3382 / VKM B-1955 / HRM2) (Desulfobacterium autotrophicum).